Consider the following 103-residue polypeptide: MVEILLAFNIDVYVLMDEDPGNQSTQQLISRIRNLIGDKLFLQSPNLEGIFNFDQIRRDHGIQRNKFSKEIALKVLPTWFESNSVPPVYESLKNIIGVTNENG.

This is an uncharacterized protein from Archaeoglobus fulgidus (strain ATCC 49558 / DSM 4304 / JCM 9628 / NBRC 100126 / VC-16).